Here is a 506-residue protein sequence, read N- to C-terminus: Deoxyguanosinetriphosphate triphosphohydrolase (506 aa).

An HD domain is found at 66-274; it reads RLTHSLEVQQ…MEAADDISYC (209 aa).

The protein belongs to the dGTPase family. Type 1 subfamily. In terms of assembly, homotetramer. The cofactor is Mg(2+).

It carries out the reaction dGTP + H2O = 2'-deoxyguanosine + triphosphate + H(+). DGTPase preferentially hydrolyzes dGTP over the other canonical NTPs. This is Deoxyguanosinetriphosphate triphosphohydrolase from Yersinia pestis bv. Antiqua (strain Antiqua).